The sequence spans 430 residues: 3-phosphoshikimate 1-carboxyvinyltransferase (430 aa).

3 residues coordinate 3-phosphoshikimate: K25, S26, and R30. K25 lines the phosphoenolpyruvate pocket. Phosphoenolpyruvate-binding residues include G97 and R125. Residues S170, Q172, D318, and K345 each contribute to the 3-phosphoshikimate site. Residue Q172 participates in phosphoenolpyruvate binding. D318 (proton acceptor) is an active-site residue. Positions 349 and 391 each coordinate phosphoenolpyruvate.

The protein belongs to the EPSP synthase family. In terms of assembly, monomer.

Its subcellular location is the cytoplasm. The catalysed reaction is 3-phosphoshikimate + phosphoenolpyruvate = 5-O-(1-carboxyvinyl)-3-phosphoshikimate + phosphate. It participates in metabolic intermediate biosynthesis; chorismate biosynthesis; chorismate from D-erythrose 4-phosphate and phosphoenolpyruvate: step 6/7. Catalyzes the transfer of the enolpyruvyl moiety of phosphoenolpyruvate (PEP) to the 5-hydroxyl of shikimate-3-phosphate (S3P) to produce enolpyruvyl shikimate-3-phosphate and inorganic phosphate. This Shouchella clausii (strain KSM-K16) (Alkalihalobacillus clausii) protein is 3-phosphoshikimate 1-carboxyvinyltransferase.